The chain runs to 354 residues: MPTSFPELDLENFEYDDSAEACYLGDIVAFGTIFLSIFYSLVFTFGLVGNLLVVLALTNSRKSKSITDIYLLNLALSDLLFVATLPFWTHYLISHEGLHNAMCKLTTAFFFIGFFGGIFFITVISIDRYLAIVLAANSMNNRTVQHGVTISLGVWAAAILVASPQFMFTKRKDNECLGDYPEVLQEIWPVLRNSEVNILGFVLPLLIMSFCYFRIVRTLFSCKNRKKARAIRLILLVVVVFFLFWTPYNIVIFLETLKFYNFFPSCGMKRDLRWALSVTETVAFSHCCLNPFIYAFAGEKFRRYLRHLYNKCLAVLCGRPVHAGFSTESQRSRQDSILSSLTHYTSEGEGSLLL.

At 1 to 32 the chain is on the extracellular side; the sequence is MPTSFPELDLENFEYDDSAEACYLGDIVAFGT. A helical membrane pass occupies residues 33–60; it reads IFLSIFYSLVFTFGLVGNLLVVLALTNS. Over 61 to 70 the chain is Cytoplasmic; that stretch reads RKSKSITDIY. The helical transmembrane segment at 71 to 91 threads the bilayer; it reads LLNLALSDLLFVATLPFWTHY. Over 92–104 the chain is Extracellular; sequence LISHEGLHNAMCK. The cysteines at positions 103 and 176 are disulfide-linked. The helical transmembrane segment at 105 to 126 threads the bilayer; the sequence is LTTAFFFIGFFGGIFFITVISI. Residues 127 to 143 are Cytoplasmic-facing; the sequence is DRYLAIVLAANSMNNRT. Residues 144-168 traverse the membrane as a helical segment; sequence VQHGVTISLGVWAAAILVASPQFMF. Residues 169 to 196 are Extracellular-facing; the sequence is TKRKDNECLGDYPEVLQEIWPVLRNSEV. A helical transmembrane segment spans residues 197–216; that stretch reads NILGFVLPLLIMSFCYFRIV. At 217–232 the chain is on the cytoplasmic side; it reads RTLFSCKNRKKARAIR. A helical membrane pass occupies residues 233-257; that stretch reads LILLVVVVFFLFWTPYNIVIFLETL. Topologically, residues 258-274 are extracellular; it reads KFYNFFPSCGMKRDLRW. Residues 275-298 form a helical membrane-spanning segment; the sequence is ALSVTETVAFSHCCLNPFIYAFAG. Residues 299–354 lie on the Cytoplasmic side of the membrane; that stretch reads EKFRRYLRHLYNKCLAVLCGRPVHAGFSTESQRSRQDSILSSLTHYTSEGEGSLLL. T345 is subject to Phosphothreonine.

The protein belongs to the G-protein coupled receptor 1 family. Found in a ternary complex with CX3CL1 and ITGAV:ITGB3 or ITGA4:ITGB1. This protein is not N-glycosylated which is unusual for G-protein-coupled receptors. Most abundant in adult spinal cord, brain, kidney, gut, uterus and testes.

The protein localises to the cell membrane. Functionally, receptor for the C-X3-C chemokine fractalkine (CX3CL1) present on many early leukocyte cells; CX3CR1-CX3CL1 signaling exerts distinct functions in different tissue compartments, such as immune response, inflammation, cell adhesion and chemotaxis. CX3CR1-CX3CL1 signaling mediates cell migratory functions. Responsible for the recruitment of natural killer (NK) cells to inflamed tissues. Acts as a regulator of inflammation process leading to atherogenesis by mediating macrophage and monocyte recruitment to inflamed atherosclerotic plaques, promoting cell survival. Involved in airway inflammation by promoting interleukin 2-producing T helper (Th2) cell survival in inflamed lung. Involved in the migration of circulating monocytes to non-inflamed tissues, where they differentiate into macrophages and dendritic cells. Acts as a negative regulator of angiogenesis, probably by promoting macrophage chemotaxis. Plays a key role in brain microglia by regulating inflammatory response in the central nervous system (CNS) and regulating synapse maturation. Required to restrain the microglial inflammatory response in the CNS and the resulting parenchymal damage in response to pathological stimuli. Involved in brain development by participating in synaptic pruning, a natural process during which brain microglia eliminates extra synapses during postnatal development. Synaptic pruning by microglia is required to promote the maturation of circuit connectivity during brain development. Acts as an important regulator of the gut microbiota by controlling immunity to intestinal bacteria and fungi. Expressed in lamina propria dendritic cells in the small intestine, which form transepithelial dendrites capable of taking up bacteria in order to provide defense against pathogenic bacteria. Required to initiate innate and adaptive immune responses against dissemination of commensal fungi (mycobiota) component of the gut: expressed in mononuclear phagocytes (MNPs) and acts by promoting induction of antifungal IgG antibodies response to confer protection against disseminated C.albicans or C.auris infection. Also acts as a receptor for C-C motif chemokine CCL26, inducing cell chemotaxis. The protein is CX3C chemokine receptor 1 of Rattus norvegicus (Rat).